The sequence spans 185 residues: Putative 3-methyladenine DNA glycosylase (185 aa).

This sequence belongs to the DNA glycosylase MPG family.

This is Putative 3-methyladenine DNA glycosylase from Rhizobium meliloti (strain 1021) (Ensifer meliloti).